Consider the following 189-residue polypeptide: Elongation factor P (189 aa).

K34 carries the N6-(3,6-diaminohexanoyl)-5-hydroxylysine modification.

Belongs to the elongation factor P family. In terms of processing, may be beta-lysylated on the epsilon-amino group of Lys-34 by the combined action of EpmA and EpmB, and then hydroxylated on the C5 position of the same residue by EpmC (if this protein is present). Lysylation is critical for the stimulatory effect of EF-P on peptide-bond formation. The lysylation moiety may extend toward the peptidyltransferase center and stabilize the terminal 3-CCA end of the tRNA. Hydroxylation of the C5 position on Lys-34 may allow additional potential stabilizing hydrogen-bond interactions with the P-tRNA.

Its subcellular location is the cytoplasm. It participates in protein biosynthesis; polypeptide chain elongation. Involved in peptide bond synthesis. Alleviates ribosome stalling that occurs when 3 or more consecutive Pro residues or the sequence PPG is present in a protein, possibly by augmenting the peptidyl transferase activity of the ribosome. Modification of Lys-34 is required for alleviation. The sequence is that of Elongation factor P from Halorhodospira halophila (strain DSM 244 / SL1) (Ectothiorhodospira halophila (strain DSM 244 / SL1)).